Consider the following 662-residue polypeptide: Transcription activator of gluconeogenesis NECHADRAFT_59099 (662 aa).

The disordered stretch occupies residues 1–61 (MPHEMEENGA…KDPLRPRRKK (61 aa)). Basic and acidic residues-rich tracts occupy residues 25-34 (TFLKDDEKMT) and 43-56 (TEVK…DPLR). A DNA-binding region (zn(2)-C6 fungal-type) is located at residues 66-94 (CFACQRAHLTCGDERPCQRCIKRGLADAC). Disordered stretches follow at residues 105 to 149 (LHDA…TGSN), 502 to 524 (YSGR…MTTP), and 580 to 606 (YRAP…SSRV). Polar residues-rich tracts occupy residues 121-130 (YNPTPTPSRT) and 137-149 (SSQS…TGSN). Residues 448 to 519 (TLVEYDDFLQ…TNTPDHNSQG (72 aa)) enclose the PAS domain. Positions 582-593 (APQDPDQKEPGS) are enriched in basic and acidic residues.

This sequence belongs to the ERT1/acuK family.

It localises to the nucleus. In terms of biological role, transcription factor which regulates nonfermentable carbon utilization. Activator of gluconeogenetic genes. The sequence is that of Transcription activator of gluconeogenesis NECHADRAFT_59099 from Fusarium vanettenii (strain ATCC MYA-4622 / CBS 123669 / FGSC 9596 / NRRL 45880 / 77-13-4) (Fusarium solani subsp. pisi).